A 610-amino-acid polypeptide reads, in one-letter code: Tyrosine-protein kinase Drl (610 aa).

Residues 1–20 (MAPNLLTIGLLLTLIASGQA) form the signal peptide. The Extracellular portion of the chain corresponds to 21-242 (HLNIFLNLHE…RENLVPPASG (222 aa)). One can recognise a WIF domain in the interval 24 to 155 (IFLNLHEVLR…NLIFKRKKIC (132 aa)). Residues asparagine 63, asparagine 99, and asparagine 143 are each glycosylated (N-linked (GlcNAc...) asparagine). The segment at 202–230 (QAPEKQRPVVTESPVGRGNSGGSKRDFDP) is disordered. Residues 243 to 263 (LVTLIVGGILALVLVSTLILI) traverse the membrane as a helical segment. Residues 264 to 610 (AYCAKGPSKR…EFHTQITRYV (347 aa)) lie on the Cytoplasmic side of the membrane. One can recognise a Protein kinase domain in the interval 343 to 606 (VRLSCLVQEG…ICLSEFHTQI (264 aa)). ATP is bound by residues 349–357 (VQEGNFGRI) and lysine 371. Catalysis depends on aspartate 468, which acts as the Proton acceptor. Position 498 is a phosphotyrosine; by autocatalysis (tyrosine 498).

This sequence belongs to the protein kinase superfamily. Tyr protein kinase family. In terms of tissue distribution, in the embryonic abdominal hemisegment, expression is restricted to cell body, axon and growth cone of a cluster of 20 ventral nerve cord interneurons. During muscle growth and attachment events in the embryonic abdominal hemisegment, expression is in somatic muscle fibers 21-23 at 10-13 hours and 2 patches of approximately 15 neighboring epidermal cells (dorsal and ventral attachment sites) at 6-13 hours.

Its subcellular location is the cell membrane. It catalyses the reaction L-tyrosyl-[protein] + ATP = O-phospho-L-tyrosyl-[protein] + ADP + H(+). In terms of biological role, probable coreceptor of Wnt proteins. Involved in neuronal pathway recognition and ventral muscle attachment site selection. Non-vital for development. May be part of a signal transduction cascade involved in learning and possibly memory. This Drosophila melanogaster (Fruit fly) protein is Tyrosine-protein kinase Drl (drl).